A 73-amino-acid polypeptide reads, in one-letter code: Omega-conotoxin CVID (73 aa).

A signal peptide spans Met1–Ala22. The propeptide occupies Asp23 to Arg45. 3 disulfides stabilise this stretch: Cys46/Cys61, Cys53/Cys65, and Cys60/Cys72. Position 72 is a cysteine amide (Cys72).

It belongs to the conotoxin O1 superfamily. In terms of tissue distribution, expressed by the venom duct.

It localises to the secreted. Omega-conotoxins act at presynaptic membranes, they bind and block voltage-gated calcium channels. This toxin inhibits neurotransmitter release, it blocks N-type calcium channels, probably a N-type (Cav2.2/CACNA1B) calcium channel variant. This is Omega-conotoxin CVID from Conus catus (Cat cone).